The following is an 82-amino-acid chain: MVTIRLSRGGSKKRPFYHLNVADSRRARDGRYIERLGFFNPVARGQEERLRIDLDRVNHWVSQGAQLSDRAAQLVKDASKNA.

It belongs to the bacterial ribosomal protein bS16 family.

This is Small ribosomal subunit protein bS16 from Marinomonas sp. (strain MWYL1).